The following is a 315-amino-acid chain: 4-hydroxy-3-methylbut-2-enyl diphosphate reductase (315 aa).

Cys12 serves as a coordination point for [4Fe-4S] cluster. 2 residues coordinate (2E)-4-hydroxy-3-methylbut-2-enyl diphosphate: His41 and His74. 2 residues coordinate dimethylallyl diphosphate: His41 and His74. Positions 41 and 74 each coordinate isopentenyl diphosphate. [4Fe-4S] cluster is bound at residue Cys96. His124 lines the (2E)-4-hydroxy-3-methylbut-2-enyl diphosphate pocket. A dimethylallyl diphosphate-binding site is contributed by His124. Residue His124 coordinates isopentenyl diphosphate. The active-site Proton donor is Glu126. Thr168 contributes to the (2E)-4-hydroxy-3-methylbut-2-enyl diphosphate binding site. Cys198 is a [4Fe-4S] cluster binding site. Positions 226, 227, 228, and 270 each coordinate (2E)-4-hydroxy-3-methylbut-2-enyl diphosphate. 4 residues coordinate dimethylallyl diphosphate: Ser226, Ser227, Asn228, and Ser270. The isopentenyl diphosphate site is built by Ser226, Ser227, Asn228, and Ser270.

It belongs to the IspH family. The cofactor is [4Fe-4S] cluster.

It catalyses the reaction isopentenyl diphosphate + 2 oxidized [2Fe-2S]-[ferredoxin] + H2O = (2E)-4-hydroxy-3-methylbut-2-enyl diphosphate + 2 reduced [2Fe-2S]-[ferredoxin] + 2 H(+). The catalysed reaction is dimethylallyl diphosphate + 2 oxidized [2Fe-2S]-[ferredoxin] + H2O = (2E)-4-hydroxy-3-methylbut-2-enyl diphosphate + 2 reduced [2Fe-2S]-[ferredoxin] + 2 H(+). It participates in isoprenoid biosynthesis; dimethylallyl diphosphate biosynthesis; dimethylallyl diphosphate from (2E)-4-hydroxy-3-methylbutenyl diphosphate: step 1/1. It functions in the pathway isoprenoid biosynthesis; isopentenyl diphosphate biosynthesis via DXP pathway; isopentenyl diphosphate from 1-deoxy-D-xylulose 5-phosphate: step 6/6. In terms of biological role, catalyzes the conversion of 1-hydroxy-2-methyl-2-(E)-butenyl 4-diphosphate (HMBPP) into a mixture of isopentenyl diphosphate (IPP) and dimethylallyl diphosphate (DMAPP). Acts in the terminal step of the DOXP/MEP pathway for isoprenoid precursor biosynthesis. This Pseudomonas syringae pv. tomato (strain ATCC BAA-871 / DC3000) protein is 4-hydroxy-3-methylbut-2-enyl diphosphate reductase.